The sequence spans 210 residues: Protein-L-isoaspartate O-methyltransferase (210 aa).

Ser-54 is a catalytic residue.

Belongs to the methyltransferase superfamily. L-isoaspartyl/D-aspartyl protein methyltransferase family.

The protein resides in the cytoplasm. The enzyme catalyses [protein]-L-isoaspartate + S-adenosyl-L-methionine = [protein]-L-isoaspartate alpha-methyl ester + S-adenosyl-L-homocysteine. Its function is as follows. Catalyzes the methyl esterification of L-isoaspartyl residues in peptides and proteins that result from spontaneous decomposition of normal L-aspartyl and L-asparaginyl residues. It plays a role in the repair and/or degradation of damaged proteins. This is Protein-L-isoaspartate O-methyltransferase from Methanothrix thermoacetophila (strain DSM 6194 / JCM 14653 / NBRC 101360 / PT) (Methanosaeta thermophila).